Here is a 104-residue protein sequence, read N- to C-terminus: MSLFKGFMINLFLTPIPDSPMNLLTIGTGIIGVIGGILVVKGFTFFDKCYNKNSTNNSNSDECLPIFIGGLLGGIIGIATGFSITIIIAITLAIKSIINCVESQ.

2 helical membrane-spanning segments follow: residues 26 to 46 (IGTG…FTFF) and 70 to 90 (GLLG…IIAI).

It is found in the membrane. This is an uncharacterized protein from Acanthamoeba polyphaga mimivirus (APMV).